A 600-amino-acid polypeptide reads, in one-letter code: Keratin, type II cuticular Hb4 (600 aa).

The segment at 1–165 is head; that stretch reads MSCRSYRVSS…PNAQRVKKDE (165 aa). The region spanning 165 to 476 is the IF rod domain; it reads EKEQIKTLNN…RLLEGEESRL (312 aa). The segment at 166-200 is coil 1A; it reads KEQIKTLNNKFASFIDKVRFLEQQNKLLETKWSFL. The tract at residues 201–210 is linker 1; the sequence is QEQKCIRSNL. Positions 211–311 are coil 1B; sequence EPLFESYITN…YMEEIQLLQS (101 aa). The tract at residues 312–328 is linker 12; that stretch reads HISETSVIVKMDNSRDL. The segment at 329–472 is coil 2; the sequence is NLDGIIAEVK…ATYRRLLEGE (144 aa). The tail stretch occupies residues 473-600; that stretch reads ESRLCEGVGP…STTTSCRTKY (128 aa).

The protein belongs to the intermediate filament family. As to quaternary structure, heterotetramer of two type I and two type II keratins. In terms of tissue distribution, expressed in the hair follicles.

The polypeptide is Keratin, type II cuticular Hb4 (KRT84) (Homo sapiens (Human)).